The primary structure comprises 837 residues: GRIP1-associated protein 1 (837 aa).

An N-acetylalanine modification is found at alanine 2. Residues 4 to 158 adopt a coiled-coil conformation; sequence ALSEEEFQRM…ALQERYGKEA (155 aa). Disordered stretches follow at residues 161–180, 555–577, 647–666, and 677–702; these read PSAV…PISL, KGKE…ERDG, SEMN…VSSF, and SSAI…LSDE. Residues 204–637 are a coiled coil; that stretch reads EQLQGLESSK…LQEILTNSKS (434 aa). Polar residues predominate over residues 648 to 666; sequence EMNSPSRTQTGDSSSVSSF. 8 positions are modified to phosphoserine: serine 651, serine 662, serine 664, serine 665, serine 684, serine 686, serine 687, and serine 688. The segment covering 678-690 has biased composition (low complexity); that stretch reads SAIPARSLSSSPQ. Coiled coils occupy residues 697-731 and 781-810; these read AELS…LEVS and DENL…KDME. At serine 826 the chain carries Phosphoserine.

As to quaternary structure, interacts with GRIP1, GRIP2 and AMPA receptors. Interacts (via C-terminus) with MAPK8/JNK1 and with MAP3K1/MEKK1; the interaction promotes MAP3K1-mediated phosphorylation of MAPK8. Interacts (via N-terminus) with RAB4A (in GTP-bound form). Interacts (via C-terminus) with STX12. Post-translationally, proteolytically cleaved by caspase-3. A minor C-terminal proteolytic fragment of 30 kDa is produced. Proteolytic cleavage is required for JNK signaling activation. As to expression, expressed in the central nervous system; especially in neurons.

It localises to the early endosome membrane. The protein localises to the recycling endosome membrane. The protein resides in the cell projection. Its subcellular location is the axon. It is found in the dendrite. It localises to the synapse. In terms of biological role, regulates the endosomal recycling back to the neuronal plasma membrane, possibly by connecting early and late recycling endosomal domains and promoting segregation of recycling endosomes from early endosomal membranes. Involved in the localization of recycling endosomes to dendritic spines, thereby playing a role in the maintenance of dendritic spine morphology. Required for the activity-induced AMPA receptor recycling to dendrite membranes and for long-term potentiation and synaptic plasticity. Functions as a scaffold protein in neurons to facilitate MAP3K1/MEKK1-mediated activation of the JNK1 kinase by phosphorylation, possibly by bringing MAP3K1/MEKK1 and JNK1 in close proximity. In Rattus norvegicus (Rat), this protein is GRIP1-associated protein 1 (Gripap1).